The primary structure comprises 639 residues: Elongation factor 4 (639 aa).

A tr-type G domain is found at 39–220; sequence AQIRNFCIIA…EVVRLVPPPT (182 aa). GTP contacts are provided by residues 51–56 and 167–170; these read DHGKST and NKID.

The protein belongs to the TRAFAC class translation factor GTPase superfamily. Classic translation factor GTPase family. LepA subfamily.

The protein resides in the cell membrane. It catalyses the reaction GTP + H2O = GDP + phosphate + H(+). In terms of biological role, required for accurate and efficient protein synthesis under certain stress conditions. May act as a fidelity factor of the translation reaction, by catalyzing a one-codon backward translocation of tRNAs on improperly translocated ribosomes. Back-translocation proceeds from a post-translocation (POST) complex to a pre-translocation (PRE) complex, thus giving elongation factor G a second chance to translocate the tRNAs correctly. Binds to ribosomes in a GTP-dependent manner. This Mycobacterium sp. (strain JLS) protein is Elongation factor 4.